Reading from the N-terminus, the 327-residue chain is Complex I intermediate-associated protein 30, mitochondrial (327 aa).

The N-terminal 24 residues, Met1 to Leu24, are a transit peptide targeting the mitochondrion. A disordered region spans residues Pro42–His63. Residues Arg53–His63 show a composition bias toward basic and acidic residues. Phosphoserine is present on Ser318.

This sequence belongs to the CIA30 family. Part of the mitochondrial complex I assembly/MCIA complex that comprises at least the core subunits TMEM126B, NDUFAF1, ECSIT and ACAD9 and complement subunits such as COA1 and TMEM186. Interacts with ECSIT. Interacts with ACAD9. At early stages of complex I assembly, it is found in intermediate subcomplexes that contain different subunits including NDUFB6, NDUFA6, NDUFA9, NDUFS3, NDUFS7, ND1, ND2 and ND3. Interacts with TMEM70 and TMEM242.

The protein resides in the mitochondrion. It is found in the mitochondrion matrix. In terms of biological role, as part of the MCIA complex, involved in the assembly of the mitochondrial complex I. The chain is Complex I intermediate-associated protein 30, mitochondrial from Pan troglodytes (Chimpanzee).